The chain runs to 296 residues: MADISGNGYGNAREEVVMVNLKDEVEHQQEMEDIHNPRPLKKQDSLLSVSVPFLQKLIAEFLGTYFLVFTGCASVVVNMQNDNVVTLPGIAIVWGLTIMVLIYSLGHISGAHINPAVTIAFASCGRFPLKQVPAYVISQVIGSTLAAATLRLLFGLDHDVCSGKHDVFIGSSPVGSDLQAFTMEFIVTFYLMFIISGVATDNRAIGELAGLAIGSTVLLNVLIAAPVSSASMNPGRSLGPALVYGCYKGIWIYLVAPTLGAIAGAWVYNTVRYTDKPLREITKSGSFLKTVRIGST.

Met-1 is modified (N-acetylmethionine). Transmembrane regions (helical) follow at residues Leu-57 to Val-77 and Val-84 to Ser-104. Positions Asn-114–Ala-116 match the NPA 1 motif. 3 consecutive transmembrane segments (helical) span residues Val-136–Leu-156, Ala-180–Thr-200, and Ile-205–Ala-225. The NPA 2 signature appears at Asn-233–Gly-235. Residues Gly-249–Asn-269 form a helical membrane-spanning segment. Position 286 is a phosphoserine (Ser-286).

Belongs to the MIP/aquaporin (TC 1.A.8) family. NIP (TC 1.A.8.12) subfamily. Expressed in roots.

It is found in the membrane. Water channel probably required to promote glycerol permeability and water transport across cell membranes. The polypeptide is Aquaporin NIP1-1 (NIP1-1) (Arabidopsis thaliana (Mouse-ear cress)).